Here is an 89-residue protein sequence, read N- to C-terminus: Large ribosomal subunit protein bL31B (89 aa).

Belongs to the bacterial ribosomal protein bL31 family. Type B subfamily. In terms of assembly, part of the 50S ribosomal subunit.

This chain is Large ribosomal subunit protein bL31B, found in Haemophilus ducreyi (strain 35000HP / ATCC 700724).